The chain runs to 122 residues: Large ribosomal subunit protein bL12 (122 aa).

Belongs to the bacterial ribosomal protein bL12 family. As to quaternary structure, homodimer. Part of the ribosomal stalk of the 50S ribosomal subunit. Forms a multimeric L10(L12)X complex, where L10 forms an elongated spine to which 2 to 4 L12 dimers bind in a sequential fashion. Binds GTP-bound translation factors.

Functionally, forms part of the ribosomal stalk which helps the ribosome interact with GTP-bound translation factors. Is thus essential for accurate translation. This Mycoplasma genitalium (strain ATCC 33530 / DSM 19775 / NCTC 10195 / G37) (Mycoplasmoides genitalium) protein is Large ribosomal subunit protein bL12.